The following is a 7570-amino-acid chain: MAGYLSPAAYLYVEEQEYLQAYEDVLERYKDERDKVQKKTFTKWINQHLMKVRKHVNDLYEDLRDGHNLISLLEVLSGDTLPREKGRMRFHRLQNVQIALDYLKRRQVKLVNIRNDDITDGNPKLTLGLIWTIILHFQISDIHVTGESEDMSAKERLLLWTQQATEGYAGIRCENFTTCWRDGKLFNAIIHKYRPDLIDMNTVAVQSNLANLEHAFYVAEKIGVIRLLDPEDVDVSSPDEKSVITYVSSLYDAFPKVPEGGEGIGANDVEVKWIEYQNMVNYLIQWIRHHVTTMSERTFPNNPVELKALYNQYLQFKETEIPPKETEKSKIKRLYKLLEIWIEFGRIKLLQGYHPNDIEKEWGKLIIAMLEREKALRPEVERLEMLQQIANRVQRDSVICEDKLILAGNALQSDSKRLESGVQFQNEAEIAGYILECENLLRQHVIDVQILIDGKYYQADQLVQRVAKLRDEIMALRNECSSVYSKGRILTTEQTKLMISGITQSLNSGFAQTLHPSLTSGLTQSLTPSLTSSSMTSGLSSGMTSRLTPSVTPAYTPGFPSGLVPNFSSGVEPNSLQTLKLMQIRKPLLKSSLLDQNLTEEEINMKFVQDLLNWVDEMQVQLDRTEWGSDLPSVESHLENHKNVHRAIEEFESSLKEAKISEIQMTAPLKLTYAEKLHRLESQYAKLLNTSRNQERHLDTLHNFVSRATNELIWLNEKEEEEVAYDWSERNTNIARKKDYHAELMRELDQKEENIKSVQEIAEQLLLENHPARLTIEAYRAAMQTQWSWILQLCQCVEQHIKENTAYFEFFNDAKEATDYLRNLKDAIQRKYSCDRSSSIHKLEDLVQESMEEKEELLQYKSTIANLMGKAKTIIQLKPRNSDCPLKTSIPIKAICDYRQIEITIYKDDECVLANNSHRAKWKVISPTGNEAMVPSVCFTVPPPNKEAVDLANRIEQQYQNVLTLWHESHINMKSVVSWHYLINEIDRIRASNVASIKTMLPGEHQQVLSNLQSRFEDFLEDSQESQVFSGSDITQLEKEVNVCKQYYQELLKSAEREEQEESVYNLYISEVRNIRLRLENCEDRLIRQIRTPLERDDLHESVFRITEQEKLKKELERLKDDLGTITNKCEEFFSQAAASSSVPTLRSELNVVLQNMNQVYSMSSTYIDKLKTVNLVLKNTQAAEALVKLYETKLCEEEAVIADKNNIENLISTLKQWRSEVDEKRQVFHALEDELQKAKAISDEMFKTYKERDLDFDWHKEKADQLVERWQNVHVQIDNRLRDLEGIGKSLKYYRDTYHPLDDWIQQVETTQRKIQENQPENSKTLATQLNQQKMLVSEIEMKQSKMDECQKYAEQYSATVKDYELQTMTYRAMVDSQQKSPVKRRRMQSSADLIIQEFMDLRTRYTALVTLMTQYIKFAGDSLKRLEEEEKSLEEEKKEHVEKAKELQKWVSNISKTLKDAEKAGKPPFSKQKISSEEISTKKEQLSEALQTIQLFLAKHGDKMTDEERNELEKQVKTLQESYNLLFSESLKQLQESQTSGDVKVEEKLDKVIAGTIDQTTGEVLSVFQAVLRGLIDYDTGIRLLETQLMISGLISPELRKCFDLKDAKSHGLIDEQILCQLKELSKAKEIISAASPTTIPVLDALAQSMITESMAIKVLEILLSTGSLVIPATGEQLTLQKAFQQNLVSSALFSKVLERQNMCKDLIDPCTSEKVSLIDMVQRSTLQENTGMWLLPVRPQEGGRITLKCGRNISILRAAHEGLIDRETMFRLLSAQLLSGGLINSNSGQRMTVEEAVREGVIDRDTASSILTYQVQTGGIIQSNPAKRLTVDEAVQCDLITSSSALLVLEAQRGYVGLIWPHSGEIFPTSSSLQQELITNELAYKILNGRQKIAALYIPESSQVIGLDAAKQLGIIDNNTASILKNITLPDKMPDLGDLEACKNARRWLSFCKFQPSTVHDYRQEEDVFDGEEPVTTQTSEETKKLFLSYLMINSYMDANTGQRLLLYDGDLDEAVGMLLEGCHAEFDGNTAIKECLDVLSSSGVFLNNASGREKDECTATPSSFNKCHCGEPEHEETPENRKCAIDEEFNEMRNTVINSEFSQSGKLASTISIDPKVNSSPSVCVPSLISYLTQTELADISMLRSDSENILTNYENQSRVETNERANECSHSKNIQNFPSDLIENPIMKSKMSKFCGVNETENEDNTNRDSPIFDYSPRLSALLSHDKLMHSQGSFNDTHTPESNGNKCEAPALSFSDKTMLSGQRIGEKFQDQFLGIAAINISLPGEQYGQKSLNMISSNPQVQYHNDKYISNTSGEDEKTHPGFQQMPEDKEDESEIEEYSCAVTPGGDTDNAIVSLTCATPLLDETISASDYETSLLNDQQNNTGTDTDSDDDFYDTPLFEDDDHDSLLLDGDDRDCLHPEDYDTLQEENDETASPADVFYDVSKENENSMVPQGAPVGSLSVKNKAHCLQDFLMDVEKDELDSGEKIHLNPVGSDKVNGQSLETGSERECTNILEGDESDSLTDYDIVGGKESFTASLKFDDSGSWRGRKEEYVTGQEFHSDTDHLDSMQSEESYGDYIYDSNDQDDDDDDGIDEEGGGIRDENGKPRCQNVAEDMDIQLCASILNENSDENENINTMILLDKMHSCSSLEKQQRVNVVQLASPSENNLVTEKSNLPEYTTEIAGKSKENLLNHEMVLKDVLPPIIKDTESEKTFGPASISHDNNNISSTSELGTDLANTKVKLIQGSELPELTDSVKGKDEYFKNMTPKVDSSLDHIICTEPDLIGKPAEESHLSLIASVTDKDPQGNGSDLIKGRDGKSDILIEDETSIQKMYLGEGEVLVEGLVEEENRHLKLLPGKNTRDSFKLINSQFPFPQITNNEELNQKGSLKKATVTLKDEPNNLQIIVSKSPVQFENLEEIFDTSVSKEISDDITSDITSWEGNTHFEESFTDGPEKELDLFTYLKHCAKNIKAKDVAKPNEDVPSHVLITAPPMKEHLQLGVNNTKEKSTSTQKDSPLNDMIQSNDLCSKESISGGGTEISQFTPESIEATLSILSRKHVEDVGKNDFLQSERCANGLGNDNSSNTLNTDYSFLEINNKKERIEQQLPKEQALSPRSQEKEVQIPELSQVFVEDVKDILKSRLKEGHMNPQEVEEPSACADTKILIQNLIKRITTSQLVNEASTVPSDSQMSDSSGVSPMTNSSELKPESRDDPFCIGNLKSELLLNILKQDQHSQKITGVFELMRELTHMEYDLEKRGITSKVLPLQLENIFYKLLADGYSEKIEHVGDFNQKACSTSEMMEEKPHILGDIKSKEGNYYSPNLETVKEIGLESSTVWASTLPRDEKLKDLCNDFPSHLECTSGSKEMASGDSSTEQFSSELQQCLQHTEKMHEYLTLLQDMKPPLDNQESLDNNLEALKNQLRQLETFELGLAPIAVILRKDMKLAEEFLKSLPSDFPRGHVEELSISHQSLKTAFSSLSNVSSERTKQIMLAIDSEMSKLAVSHEEFLHKLKSFSDWVSEKSKSVKDIEIVNVQDSEYVKKRLEFLKNVLKDLGHTKMQLETTAFDVQFFISEYAQDLSPNQSKQLLRLLNTTQKCFLDVQESVTTQVERLETQLHLEQDLDDQKIVAERQQEYKEKLQGICDLLTQTENRLIGHQEAFMIGDGTVELKKYQSKQEELQKDMQGSAQALAEVVKNTENFLKENGEKLSQEDKALIEQKLNEAKIKCEQLNLKAEQSKKELDKVVTTAIKEETEKVAAVKQLEESKTKIENLLDWLSNVDKDSERAGTKHKQVIEQNGTHFQEGDGKSAIGEEDEVNGNLLETDVDGQVGTTQENLNQQYQKVKAQHEKIISQHQAVIIATQSAQVLLEKQGQYLSPEEKEKLQKNMKELKVHYETALAESEKKMKLTHSLQEELEKFDADYTEFEHWLQQSEQELENLEAGADDINGLMTKLKRQKSFSEDVISHKGDLRYITISGNRVLEAAKSCSKRDGGKVDTSATHREVQRKLDHATDRFRSLYSKCNVLGNNLKDLVDKYQHYEDASCGLLAGLQACEATASKHLSEPIAVDPKNLQRQLEETKALQGQISSQQVAVEKLKKTAEVLLDARGSLLPAKNDIQKTLDDIVGRYEDLSKSVNERNEKLQITLTRSLSVQDGLDEMLDWMGNVESSLKEQGQVPLNSTALQDIISKNIMLEQDIAGRQSSINAMNEKVKKFMETTDPSTASSLQAKMKDLSARFSEASHKHKETLAKMEELKTKVELFENLSEKLQTFLETKTQALTEVDVPGKDVTELSQYMQESTSEFLEHKKHLEVLHSLLKEISSHGLPSDKALVLEKTNNLSKKFKEMEDTIKEKKEAVTSCQEQLDAFQVLVKSLKSWIKETTKKVPIVQPSFGAEDLGKSLEDTKKLQEKWSLKTPEIQKVNNSGISLCNLISAVTTPAKAIAAVKSGGAVLNGEGTATNTEEFWANKGLTSIKKDMTDISHGYEDLGLLLKDKIAELNTKLSKLQKAQEESSAMMQWLQKMNKTATKWQQTPAPTDTEAVKTQVEQNKSFEAELKQNVNKVQELKDKLTELLEENPDTPEAPRWKQMLTEIDSKWQELNQLTIDRQQKLEESSNNLTQFQTVEAQLKQWLVEKELMVSVLGPLSIDPNMLNTQRQQVQILLQEFATRKPQYEQLTAAGQGILSRPGEDPSLRGIVKEQLAAVTQKWDSLTGQLSDRCDWIDQAIVKSTQYQSLLRSLSDKLSDLDNKLSSSLAVSTHPDAMNQQLETAQKMKQEIQQEKKQIKVAQALCEDLSALVKEEYLKAELSRQLEGILKSFKDVEQKAENHVQHLQSACASSHQFQQMSRDFQAWLDTKKEEQNKSHPISAKLDVLESLIKDHKDFSKTLTAQSHMYEKTIAEGENLLLKTQGSEKAALQLQLNTIKTNWDTFNKQVKERENKLKESLEKALKYKEQVETLWPWIDKCQNNLEEIKFCLDPAEGENSIAKLKSLQKEMDQHFGMVELLNNTANSLLSVCEIDKEVVTDENKSLIQKVDMVTEQLHSKKFCLENMTQKFKEFQEVSKESKRQLQCAKEQLDIHDSLGSQAYSNKYLTMLQTQQKSLQALKHQVDLAKRLAQDLVVEASDSKGTSDVLLQVETIAQEHSTLSQQVDEKCSFLETKLQGIGHFQNTIREMFSQFAEFDDELDSMAPVGRDAETLQKQKETIKAFLKKLEALMASNDNANKTCKMMLATEETSPDLVGIKRDLEALSKQCNKLLDRAQAREEQVEGTIKRLEEFYSKLKEFSILLQKAEEHEESQGPVGMETETINQQLNMFKVFQKEEIEPLQGKQQDVNWLGQGLIQSAAKSTSTQGLEHDLDDVNARWKTLNKKVAQRAAQLQEALLHCGRFQDALESLLSWMVDTEELVANQKPPSAEFKVVKAQIQEQKLLQRLLDDRKSTVEVIKREGEKIATTAEPADKVKILKQLSLLDSRWEALLNKAETRNRQLEGISVVAQQFHETLEPLNEWLTTIEKRLVNCEPIGTQASKLEEQIAQHKALEDDIINHNKHLHQAVSIGQSLKVLSSREDKDMVQSKLDFSQVWYIEIQEKSHSRSELLQQALCNAKIFGEDEVELMNWLNEVHDKLSKLSVQDYSTEGLWKQQSELRVLQEDILLRKQNVDQALLNGLELLKQTTGDEVLIIQDKLEAIKARYKDITKLSTDVAKTLEQALQLARRLHSTHEELCTWLDKVEVELLSYETQVLKGEEASQAQMRPKELKKEAKNNKALLDSLNEVSSALLELVPWRAREGLEKMVAEDNERYRLVSDTITQKVEEIDAAILRSQQFDQAADAELSWITETEKKLMSLGDIRLEQDQTSAQLQVQKTFTMEILRHKDIIDDLVKSGHKIMTACSEEEKQSMKKKLDKVLKNYDTICQINSERYLQLERAQSLVNQFWETYEELWPWLTETQSIISQLPAPALEYETLRQQQEEHRQLRELIAEHKPHIDKMNKTGPQLLELSPGEGFSIQEKYVAADTLYSQIKEDVKKRAVALDEAISQSTQFHDKIDQILESLERIVERLRQPPSISAEVEKIKEQISENKNVSVDMEKLQPLYETLKQRGEEMIARSGGTDKDISAKAVQDKLDQMVFIWENIHTLVEEREAKLLDVMELAEKFWCDHMSLIVTIKDTQDFIRDLEDPGIDPSVVKQQQEAAETIREEIDGLQEELDIVINLGSELIAACGEPDKPIVKKSIDELNSAWDSLNKAWKDRIDKLEEAMQAAVQYQDGLQAVFDWVDIAGGKLASMSPIGTDLETVKQQIEELKQFKSEAYQQQIEMERLNHQAELLLKKVTEESDKHTVQDPLMELKLIWDSLEERIINRQHKLEGALLALGQFQHALDELLAWLTHTEGLLSEQKPVGGDPKAIEIELAKHHVLQNDVLAHQSTVEAVNKAGNDLIESSAGEEASNLQNKLEVLNQRWQNVLEKTEQRKQQLDGALRQAKGFHGEIEDLQQWLTDTERHLLASKPLGGLPETAKEQLNVHMEVCAAFEAKEETYKSLMQKGQQMLARCPKSAETNIDQDINNLKEKWESVETKLNERKTKLEEALNLAMEFHNSLQDFINWLTQAEQTLNVASRPSLILDTVLFQIDEHKVFANEVNSHREQIIELDKTGTHLKYFSQKQDVVLIKNLLISVQSRWEKVVQRLVERGRSLDDARKRAKQFHEAWSKLMEWLEESEKSLDSELEIANDPDKIKTQLAQHKEFQKSLGAKHSVYDTTNRTGRSLKEKTSLADDNLKLDDMLSELRDKWDTICGKSVERQNKLEEALLFSGQFTDALQALIDWLYRVEPQLAEDQPVHGDIDLVMNLIDNHKAFQKELGKRTSSVQALKRSARELIEGSRDDSSWVKVQMQELSTRWETVCALSISKQTRLEAALRQAEEFHSVVHALLEWLAEAEQTLRFHGVLPDDEDALRTLIDQHKEFMKKLEEKRAELNKATTMGDTVLAICHPDSITTIKHWITIIRARFEEVLAWAKQHQQRLASALAGLIAKQELLEALLAWLQWAETTLTDKDKEVIPQEIEEVKALIAEHQTFMEEMTRKQPDVDKVTKTYKRRAADPSSLQSHIPVLDKGRAGRKRFPASSLYPSGSQTQIETKNPRVNLLVSKWQQVWLLALERRRKLNDALDRLEELREFANFDFDIWRKKYMRWMNHKKSRVMDFFRRIDKDQDGKITRQEFIDGILSSKFPTSRLEMSAVADIFDRDGDGYIDYYEFVAALHPNKDAYKPITDADKIEDEVTRQVAKCKCAKRFQVEQIGDNKYRFFLGNQFGDSQQLRLVRILRSTVMVRVGGGWMALDEFLVKNDPCRVHHHGSKMLRSESNSSITTTQPTIAKGRTNMELREKFILADGASQGMAAFRPRGRRSRPSSRGASPNRSTSVSSQAAQAASPQVPATTTPKGTPIQGSKLRLPGYLSGKGFHSGEDSGLITTAAARVRTQFADSKKTPSRPGSRAGSKAGSRASSRRGSDASDFDISEIQSVCSDVETVPQTHRPTPRAGSRPSTAKPSKIPTPQRKSPASKLDKSSKR.

2 Calponin-homology (CH) domains span residues 35 to 138 (KVQK…LHFQ) and 151 to 255 (MSAK…DAFP). Positions 35-252 (KVQKKTFTKW…VITYVSSLYD (218 aa)) are actin-binding. Residues leucine 135, lysine 184, serine 236, and serine 237 each carry the phosphoserine modification. Spectrin repeat units follow at residues 602 to 699 (EINM…RHLD) and 701 to 802 (LHNF…QHIK). An SH3 domain is found at 887–944 (KTSIPIKAICDYRQIEITIYKDDECVLANNSHRAKWKVISPTGNEAMVPSVCFTVPPP). Spectrin repeat units lie at residues 1293–1422 (KYYR…KFAG) and 1440–1540 (KEHV…QESQ). Serine 1382 bears the Phosphoserine mark. A Nuclear localization signal; in isoform 6 motif is present at residues 1383–1389 (PVKRRRM). At glutamate 1565 the chain carries Phosphoserine. Plectin repeat units lie at residues 1584–1626 (IRLL…QLKE), 1660–1703 (KVLE…LERQ), 1774–1817 (RLLS…LTYQ), 1818–1855 (VQTG…LEAQ), and 1856–1891 (RGYV…KILN). Serine 2229 is subject to Phosphoserine. Disordered stretches follow at residues 2317-2346 (SNTS…IEEY), 2383-2441 (LLND…DETA), and 2585-2616 (DYIY…GKPR). The span at 2336–2345 (DKEDESEIEE) shows a compositional bias: acidic residues. Over residues 2385 to 2394 (NDQQNNTGTD) the composition is skewed to low complexity. Composition is skewed to acidic residues over residues 2395 to 2412 (TDSD…DDDH), 2430 to 2439 (YDTLQEENDE), and 2591 to 2605 (NDQD…DEEG). Serine 2919 carries the post-translational modification Phosphoserine. Residues 3190–3221 (EASTVPSDSQMSDSSGVSPMTNSSELKPESRD) form a disordered region. Low complexity predominate over residues 3192–3209 (STVPSDSQMSDSSGVSPM). 28 Spectrin repeats span residues 3395-3501 (LQHT…KQIM), 3643-3752 (QEYK…KELD), 3926-4040 (EKFD…NNLK), 4047-4153 (QHYE…EKLQ), 4160-4259 (LSVQ…ETLA), 4269-4368 (ELFE…EAVT), 4516-4621 (QKAQ…QKLE), 4628-4732 (TQFQ…DWID), 4742-4842 (QSLL…QHLQ), 4849-4951 (HQFQ…NKLK), 4958-5058 (LKYK…FCLE), 5068-5167 (QEVS…SFLE), 5174-5277 (GHFQ…EQVE), 5284-5388 (EEFY…AQLQ), 5395-5497 (GRFQ…RQLE), 5504-5715 (QQFH…KTLE), 5831-5933 (QQFD…LQLE), 5941-6041 (QFWE…VALD), 6048-6154 (TQFH…AKLL), 6161-6263 (EKFW…DKLE), 6270-6373 (VQYQ…HKLE), 6380-6482 (GQFQ…QQLD), 6489-6591 (KGFH…TKLE), 6598-6700 (MEFH…RSLD), 6707-6810 (KQFH…NKLE), 6817-6918 (GQFT…TRLE), 6925-7027 (EEFH…QRLA), and 7037-7167 (QELL…RKLN). Serine 3968 is modified (phosphoserine). A Phosphoserine modification is found at serine 4749. Lysine 5470 participates in a covalent cross-link: Glycyl lysine isopeptide (Lys-Gly) (interchain with G-Cter in ubiquitin). EF-hand domains lie at 7197–7232 (HKKS…SKFP) and 7233–7268 (TSRL…NKDA). Ca(2+)-binding residues include aspartate 7210, aspartate 7212, aspartate 7214, lysine 7216, glutamate 7221, aspartate 7246, aspartate 7248, aspartate 7250, tyrosine 7252, and glutamate 7257. One can recognise a GAR domain in the interval 7273–7351 (TDADKIEDEV…EFLVKNDPCR (79 aa)). Disordered stretches follow at residues 7358–7379 (KMLR…AKGR), 7395–7452 (SQGM…SKLR), and 7481–7570 (QFAD…SSKR). Residues 7362 to 7374 (SESNSSITTTQPT) are compositionally biased toward polar residues. 2 stretches are compositionally biased toward low complexity: residues 7411–7441 (SSRG…TTTP) and 7490–7504 (SRPG…GSRA). A Phosphoserine modification is found at serine 7432. Phosphoserine is present on residues serine 7510, serine 7513, and serine 7525. The span at 7519 to 7535 (EIQSVCSDVETVPQTHR) shows a compositional bias: polar residues. Positions 7550 to 7553 (SKIP) match the Microtubule tip localization signal motif.

As to quaternary structure, homodimer. Isoform 1 interacts (via N-terminus) with PLEC (via N-terminus). Interacts with the neuronal intermediate filament protein, PRPH. Interacts with DES. Interacts with SYNE3. Isoform 1 and isoform 6 can homodimerize (via N-terminus). Isoform 1 interacts (via N-terminus) with ACTN2. Isoform 1 interacts (via N-terminus) with PLEC (via N-terminus). Isoform 3 interacts (via N-terminus) with COL17A1 (via cytoplasmic region). Isoform 3 interacts (via N-terminus) with ITGB4 isoform beta-4a (via cytoplasmic region). Isoform 3 interacts (via N-terminus) with ERBIN (via C-terminus). Isoform 3 associates (via C-terminal) with KRT5-KRT14 (via rod region) intermediate filaments of keratins. Interacts with MAPRE1; probably required for targeting to the growing microtubule plus ends. Interacts with TMIGD2. Isoform 9 interacts with TMEM108. In terms of tissue distribution, isoform 1 is expressed in myoblasts (at protein level). Isoform 3 is expressed in the skin. Isoform 6 is expressed in the brain. Highly expressed in skeletal muscle and cultured keratinocytes.

It localises to the cytoplasm. The protein localises to the cytoskeleton. The protein resides in the stress fiber. It is found in the cell projection. Its subcellular location is the axon. It localises to the myofibril. The protein localises to the sarcomere. The protein resides in the z line. It is found in the h zone. Its subcellular location is the cell junction. It localises to the hemidesmosome. The protein localises to the nucleus. The protein resides in the nucleus envelope. It is found in the membrane. Its subcellular location is the endoplasmic reticulum membrane. It localises to the cell cortex. The protein localises to the cell membrane. Functionally, cytoskeletal linker protein. Acts as an integrator of intermediate filaments, actin and microtubule cytoskeleton networks. Required for anchoring either intermediate filaments to the actin cytoskeleton in neural and muscle cells or keratin-containing intermediate filaments to hemidesmosomes in epithelial cells. The proteins may self-aggregate to form filaments or a two-dimensional mesh. Regulates the organization and stability of the microtubule network of sensory neurons to allow axonal transport. Mediates docking of the dynein/dynactin motor complex to vesicle cargos for retrograde axonal transport through its interaction with TMEM108 and DCTN1. Its function is as follows. Plays a structural role in the assembly of hemidesmosomes of epithelial cells; anchors keratin-containing intermediate filaments to the inner plaque of hemidesmosomes. Required for the regulation of keratinocyte polarity and motility; mediates integrin ITGB4 regulation of RAC1 activity. In terms of biological role, required for bundling actin filaments around the nucleus. Regulates the organization and stability of the microtubule network of sensory neurons to allow axonal transport. This Homo sapiens (Human) protein is Dystonin.